Consider the following 249-residue polypeptide: MATAGEESQTQAGRHQEVGHKSLLQSDALYQYILETSVYPREPEPMKELREITAKHPWNIMTTSADEGQFLNMLLKLINAKNTMEIGVFTGYSLLATALALPDDGKILAMDINRENYELGLPVIQKAGVADKIDFREGPALPILDQLIEDGKQGSFDFIFVDADKDNYLNYHKRLIELVKVGGLIGYDNTLWNGSVVAPPDAPLRKYVRYYRDFVLELNKALAADPRIEICMLPVGDGITLCRRIQLSI.

Lys21 lines the substrate pocket. S-adenosyl-L-methionine is bound by residues Thr63, Glu85, 87–88, Ser93, Asp111, and Ala140; that span reads GV. Asp162 is a binding site for substrate. Asp162 contributes to the a divalent metal cation binding site. Asp164 serves as a coordination point for S-adenosyl-L-methionine. Residues Asp188 and Asn189 each contribute to the a divalent metal cation site. A substrate-binding site is contributed by Asn193.

Belongs to the class I-like SAM-binding methyltransferase superfamily. Cation-dependent O-methyltransferase family. CCoAMT subfamily. Homodimer. Requires a divalent metal cation as cofactor.

The enzyme catalyses (E)-caffeoyl-CoA + S-adenosyl-L-methionine = (E)-feruloyl-CoA + S-adenosyl-L-homocysteine + H(+). It functions in the pathway aromatic compound metabolism; phenylpropanoid biosynthesis. Functionally, methylates caffeoyl-CoA to feruloyl-CoA and 5-hydroxyferuloyl-CoA to sinapoyl-CoA. Plays a role in the synthesis of feruloylated polysaccharides. Involved in the reinforcement of the plant cell wall. Also involved in the responding to wounding or pathogen challenge by the increased formation of cell wall-bound ferulic acid polymers. The sequence is that of Caffeoyl-CoA O-methyltransferase from Eucalyptus gunnii (Cider gum).